The primary structure comprises 457 residues: Multidrug resistance protein MdtK (457 aa).

The next 12 helical transmembrane spans lie at leucine 11–valine 31, isoleucine 53–alanine 73, tryptophan 93–isoleucine 113, alanine 127–alanine 147, glycine 160–tyrosine 180, leucine 188–methionine 208, leucine 243–valine 263, isoleucine 276–threonine 296, alanine 314–valine 334, valine 350–isoleucine 370, isoleucine 387–alanine 407, and proline 418–leucine 438.

The protein belongs to the multi antimicrobial extrusion (MATE) (TC 2.A.66.1) family. MdtK subfamily.

It localises to the cell inner membrane. Functionally, multidrug efflux pump that functions probably as a Na(+)/drug antiporter. The polypeptide is Multidrug resistance protein MdtK (Salmonella enteritidis PT4 (strain P125109)).